Here is a 324-residue protein sequence, read N- to C-terminus: Ribose-phosphate pyrophosphokinase 1 (324 aa).

ATP-binding positions include 39 to 41 (DGE) and 98 to 99 (RQ). Mg(2+)-binding residues include His132 and Asp174. Lys197 is a catalytic residue. Residues Arg199, Asp223, and 227 to 231 (DTAGT) each bind D-ribose 5-phosphate.

It belongs to the ribose-phosphate pyrophosphokinase family. Class I subfamily. In terms of assembly, homohexamer. Requires Mg(2+) as cofactor.

It localises to the cytoplasm. It carries out the reaction D-ribose 5-phosphate + ATP = 5-phospho-alpha-D-ribose 1-diphosphate + AMP + H(+). The protein operates within metabolic intermediate biosynthesis; 5-phospho-alpha-D-ribose 1-diphosphate biosynthesis; 5-phospho-alpha-D-ribose 1-diphosphate from D-ribose 5-phosphate (route I): step 1/1. Involved in the biosynthesis of the central metabolite phospho-alpha-D-ribosyl-1-pyrophosphate (PRPP) via the transfer of pyrophosphoryl group from ATP to 1-hydroxyl of ribose-5-phosphate (Rib-5-P). The chain is Ribose-phosphate pyrophosphokinase 1 from Lactococcus lactis subsp. lactis (strain IL1403) (Streptococcus lactis).